We begin with the raw amino-acid sequence, 283 residues long: Octanoyl-[GcvH]:protein N-octanoyltransferase (283 aa).

A BPL/LPL catalytic domain is found at 42–248 (GQSDAVVRTW…TLQSFGGELY (207 aa)). The active-site Acyl-thioester intermediate is cysteine 147.

Belongs to the octanoyltransferase LipL family.

It carries out the reaction N(6)-octanoyl-L-lysyl-[glycine-cleavage complex H protein] + L-lysyl-[lipoyl-carrier protein] = N(6)-octanoyl-L-lysyl-[lipoyl-carrier protein] + L-lysyl-[glycine-cleavage complex H protein]. It functions in the pathway protein modification; protein lipoylation via endogenous pathway; protein N(6)-(lipoyl)lysine from octanoyl-[acyl-carrier-protein]. Catalyzes the amidotransfer (transamidation) of the octanoyl moiety from octanoyl-GcvH to the lipoyl domain of the E2 subunit of lipoate-dependent enzymes. This Geobacillus kaustophilus (strain HTA426) protein is Octanoyl-[GcvH]:protein N-octanoyltransferase.